The sequence spans 236 residues: Large ribosomal subunit protein uL3 (236 aa).

Residues 139–149 (SVSHRSHGSTG) are compositionally biased toward low complexity. Positions 139–165 (SVSHRSHGSTGQRQDPGKVFKGKKMAG) are disordered. At glutamine 152 the chain carries N5-methylglutamine.

The protein belongs to the universal ribosomal protein uL3 family. Part of the 50S ribosomal subunit. Forms a cluster with proteins L14 and L19. In terms of processing, methylated by PrmB.

Functionally, one of the primary rRNA binding proteins, it binds directly near the 3'-end of the 23S rRNA, where it nucleates assembly of the 50S subunit. This chain is Large ribosomal subunit protein uL3, found in Pelagibacter ubique (strain HTCC1062).